A 220-amino-acid chain; its full sequence is Guanylate kinase (220 aa).

Residues 3–180 (GRLFVMTGAS…AVADFLAILT (178 aa)) enclose the Guanylate kinase-like domain. 10 to 17 (GASGVGKG) serves as a coordination point for ATP.

Belongs to the guanylate kinase family.

It is found in the cytoplasm. It catalyses the reaction GMP + ATP = GDP + ADP. Functionally, essential for recycling GMP and indirectly, cGMP. The sequence is that of Guanylate kinase from Thermus thermophilus (strain ATCC BAA-163 / DSM 7039 / HB27).